Consider the following 344-residue polypeptide: Secreted LysM effector LysM2 (344 aa).

A signal peptide spans 1–24; sequence MMAPKSLQTGLLILLLAKLKLAWG. The LysM 1 domain maps to 36 to 80; it reads YEAAASSGDTCTSFAAEWGLTEETFASLNPSAACPSLVAGQNYCM. Residues 88–134 show a composition bias toward low complexity; that stretch reads STTSSSSSTTSSSTTSSSTTSSSTTSSSTTTSSFTTTTASETTSTAA. The disordered stretch occupies residues 88–141; it reads STTSSSSSTTSSSTTSSSTTSSSTTSSSTTTSSFTTTTASETTSTAANGVTTPM. 3 LysM domains span residues 153–199, 216–262, and 296–342; these read KFDL…YVCV and KFWL…YICV.

The protein belongs to the secreted LysM effector family.

Might have a role in sequestration of chitin oligosaccharides (breakdown products of fungal cell walls that are released during invasion and act as triggers of host immunity) to dampen host defense. This chain is Secreted LysM effector LysM2, found in Penicillium expansum (Blue mold rot fungus).